The following is a 338-amino-acid chain: MSPEEELQSNVSVASSSPTSNCISRNTLGGLKEHNYLGLSDCSSVGSSTLSPLAEDDKATISLKATELTLGLPGSQSPARDTELNLLSPAKLDEKPFFPLLPSKDEICSSSQKNNASGNKRGFSDTMDQFAEAKSSVYTEKNWMFPEAAATQSVTKKDVPQNIPKGQSSTTNNSSSPPAAKAQIVGWPPVRSYRKNTLATTCKNSDEVDGRPGSGALFVKVSMDGAPYLRKVDLRSYTNYGELSSALEKMFTTFTLGQCGSNGAAGKDMLSETKLKDLLNGKDYVLTYEDKDGDWMLVGDVPWEMFIDVCKKLKIMKGCDAIGLAAAPRAMEKSKMRA.

Residues 1 to 25 (MSPEEELQSNVSVASSSPTSNCISR) are disordered. The segment covering 9-21 (SNVSVASSSPTSN) has biased composition (low complexity). The short motif at 68 to 72 (LTLGL) is the EAR-like (transcriptional repression) element. The disordered stretch occupies residues 150-186 (ATQSVTKKDVPQNIPKGQSSTTNNSSSPPAAKAQIVG). Residues 168-180 (SSTTNNSSSPPAA) show a composition bias toward low complexity. One can recognise a PB1 domain in the interval 216–318 (ALFVKVSMDG…VCKKLKIMKG (103 aa)).

It belongs to the Aux/IAA family. In terms of assembly, homodimers and heterodimers. Interacts with TPL. Phosphorylated by phytochrome A in vitro. In terms of tissue distribution, highly expressed in the whole plant.

Its subcellular location is the nucleus. Its function is as follows. Aux/IAA proteins are short-lived transcriptional factors that function as repressors of early auxin response genes at low auxin concentrations. Repression is thought to result from the interaction with auxin response factors (ARFs), proteins that bind to the auxin-responsive promoter element (AuxRE). Formation of heterodimers with ARF proteins may alter their ability to modulate early auxin response genes expression. This chain is Auxin-responsive protein IAA9 (IAA9), found in Arabidopsis thaliana (Mouse-ear cress).